The primary structure comprises 143 residues: Putative pre-16S rRNA nuclease (143 aa).

The protein belongs to the YqgF nuclease family.

The protein localises to the cytoplasm. Functionally, could be a nuclease involved in processing of the 5'-end of pre-16S rRNA. The protein is Putative pre-16S rRNA nuclease of Crocosphaera subtropica (strain ATCC 51142 / BH68) (Cyanothece sp. (strain ATCC 51142)).